The chain runs to 347 residues: Fructose-1,6-bisphosphatase class 1 2 (347 aa).

Positions 92, 111, 113, and 114 each coordinate Mg(2+). Substrate contacts are provided by residues 114-117 (DGSS) and asparagine 202. Glutamate 274 is a binding site for Mg(2+).

The protein belongs to the FBPase class 1 family. As to quaternary structure, homotetramer. Mg(2+) serves as cofactor.

The protein resides in the cytoplasm. It carries out the reaction beta-D-fructose 1,6-bisphosphate + H2O = beta-D-fructose 6-phosphate + phosphate. It functions in the pathway carbohydrate biosynthesis; Calvin cycle. The polypeptide is Fructose-1,6-bisphosphatase class 1 2 (Bradyrhizobium sp. (strain BTAi1 / ATCC BAA-1182)).